Reading from the N-terminus, the 376-residue chain is Chaperone protein DnaJ (376 aa).

Positions 5-70 (DFYEVLGVER…SKRAAYDQYG (66 aa)) constitute a J domain. The CR-type zinc finger occupies 135–213 (GTTVTIRVPT…CHGQGRVEEQ (79 aa)). The Zn(2+) site is built by cysteine 148, cysteine 151, cysteine 165, cysteine 168, cysteine 187, cysteine 190, cysteine 201, and cysteine 204. CXXCXGXG motif repeat units follow at residues 148 to 155 (CKTCDGSG), 165 to 172 (CTTCGGIG), 187 to 194 (CPRCHGSG), and 201 to 208 (CGSCHGQG).

Belongs to the DnaJ family. In terms of assembly, homodimer. It depends on Zn(2+) as a cofactor.

Its subcellular location is the cytoplasm. Its function is as follows. Participates actively in the response to hyperosmotic and heat shock by preventing the aggregation of stress-denatured proteins and by disaggregating proteins, also in an autonomous, DnaK-independent fashion. Unfolded proteins bind initially to DnaJ; upon interaction with the DnaJ-bound protein, DnaK hydrolyzes its bound ATP, resulting in the formation of a stable complex. GrpE releases ADP from DnaK; ATP binding to DnaK triggers the release of the substrate protein, thus completing the reaction cycle. Several rounds of ATP-dependent interactions between DnaJ, DnaK and GrpE are required for fully efficient folding. Also involved, together with DnaK and GrpE, in the DNA replication of plasmids through activation of initiation proteins. In Stutzerimonas stutzeri (Pseudomonas stutzeri), this protein is Chaperone protein DnaJ.